A 429-amino-acid polypeptide reads, in one-letter code: C4-dicarboxylate transport protein (429 aa).

Helical transmembrane passes span 9-29, 45-65, 79-99, 149-169, 185-205, 223-243, 308-328, and 356-376; these read VLYVQVIFAIIVGVILGHFYP, LIKMVIGPIIFCTVVTGIAGM, LLYFEVVSTFALLLGLAATHI, GEILQILLIALLFGSVLAHLG, VLFGIVHIVTKLAPIGAFGAM, LIGTFYLTSIVFVLVVLGTIA, IYMTMAVLFIAQATNIELTWM, and AATLAVVPTIPLSGMVLILGI.

Belongs to the dicarboxylate/amino acid:cation symporter (DAACS) (TC 2.A.23) family.

It localises to the cell inner membrane. In terms of biological role, responsible for the transport of dicarboxylates such as succinate, fumarate, and malate from the periplasm across the membrane. The chain is C4-dicarboxylate transport protein from Burkholderia ambifaria (strain MC40-6).